Consider the following 66-residue polypeptide: Large ribosomal subunit protein uL29 (66 aa).

This sequence belongs to the universal ribosomal protein uL29 family.

The chain is Large ribosomal subunit protein uL29 from Rhizobium meliloti (strain 1021) (Ensifer meliloti).